The primary structure comprises 480 residues: Acetyl-coenzyme A carboxylase carboxyl transferase subunit beta, chloroplastic (480 aa).

The region spanning 212 to 480 (LWVQCENCYG…FPLNQINKYK (269 aa)) is the CoA carboxyltransferase N-terminal domain. Residues Cys-216, Cys-219, Cys-235, and Cys-238 each contribute to the Zn(2+) site. The C4-type zinc-finger motif lies at 216 to 238 (CENCYGLNYQKFFRSKMNICERC).

This sequence belongs to the AccD/PCCB family. In terms of assembly, acetyl-CoA carboxylase is a heterohexamer composed of biotin carboxyl carrier protein, biotin carboxylase and 2 subunits each of ACCase subunit alpha and ACCase plastid-coded subunit beta (accD). Zn(2+) is required as a cofactor.

The protein localises to the plastid. It localises to the chloroplast stroma. It catalyses the reaction N(6)-carboxybiotinyl-L-lysyl-[protein] + acetyl-CoA = N(6)-biotinyl-L-lysyl-[protein] + malonyl-CoA. It participates in lipid metabolism; malonyl-CoA biosynthesis; malonyl-CoA from acetyl-CoA: step 1/1. Functionally, component of the acetyl coenzyme A carboxylase (ACC) complex. Biotin carboxylase (BC) catalyzes the carboxylation of biotin on its carrier protein (BCCP) and then the CO(2) group is transferred by the transcarboxylase to acetyl-CoA to form malonyl-CoA. This is Acetyl-coenzyme A carboxylase carboxyl transferase subunit beta, chloroplastic from Illicium oligandrum (Star anise).